A 160-amino-acid chain; its full sequence is Putative pre-16S rRNA nuclease (160 aa).

This sequence belongs to the YqgF nuclease family.

The protein resides in the cytoplasm. Its function is as follows. Could be a nuclease involved in processing of the 5'-end of pre-16S rRNA. This is Putative pre-16S rRNA nuclease from Rhodopseudomonas palustris (strain BisB5).